A 610-amino-acid polypeptide reads, in one-letter code: Zinc metalloproteinase-disintegrin-like halysase (610 aa).

Residues 1–20 form the signal peptide; the sequence is MIQVLLVTICLAVFPYQGSS. Residues 21-182 constitute a propeptide that is removed on maturation; that stretch reads IILESGNVND…WESYEPIKKA (162 aa). In terms of domain architecture, Peptidase M12B spans 199-395; it reads KYVKLVMVAD…DMPQCILKKP (197 aa). Residue Asn-218 is glycosylated (N-linked (GlcNAc...) asparagine). Intrachain disulfides connect Cys-310–Cys-390, Cys-350–Cys-374, and Cys-352–Cys-357. His-335 contributes to the Zn(2+) binding site. Residue Glu-336 is part of the active site. Zn(2+) contacts are provided by His-339 and His-345. A Disintegrin domain is found at 403–488; it reads PPVCGNYFVE…AECTDRFQRN (86 aa). The Ca(2+) site is built by Val-405, Asn-408, Phe-410, Glu-412, Glu-415, and Asp-418. 14 cysteine pairs are disulfide-bonded: Cys-406/Cys-435, Cys-417/Cys-430, Cys-419/Cys-425, Cys-429/Cys-452, Cys-443/Cys-449, Cys-448/Cys-474, Cys-461/Cys-481, Cys-468/Cys-499, Cys-492/Cys-504, Cys-511/Cys-561, Cys-526/Cys-572, Cys-539/Cys-549, Cys-556/Cys-598, and Cys-592/Cys-603. Positions 467-469 match the D/ECD-tripeptide motif; that stretch reads ECD.

Belongs to the venom metalloproteinase (M12B) family. P-III subfamily. P-IIIa sub-subfamily. As to quaternary structure, monomer. Zn(2+) is required as a cofactor. As to expression, expressed by the venom gland.

The protein localises to the secreted. With respect to regulation, inhibited by EDTA and EGTA. Not inhibited by PMSF, antipain, pepstatin, and iodoacetamide. Functionally, strongly inhibits the collagen-induced human platelet aggregation (inhibition of alpha-2/beta-1 (ITGA2/ITGB1) integrin). Hydrolyzes the Aalpha-chain of fibrinogen, without cleavage of Bbeta- and gamma-chains. Degrades type IV collagen (but not types I, II and V), fibronectin and vitronectin and also integrins alpha-1/beta-1 (ITGA1/ITGB1) and alpha-5/beta/1 (ITGA5/ITGB1) (but not alpha-V/beta-3 (ITGAV/ITGB3) and alpha-V/beta-5 (ITGAV/ITGB5) integrins). Both metalloproteinase (peptidase M12B) and disintegrin-like domains (recombinantly expressed and named halydin) play characteristic roles to inhibit human platelet aggregation. Induces apoptosis and strongly inhibits proliferation of endothelial cells as well as adhesion of the cells to extracellular matrix proteins. The apoptosis is closely associated with activation of caspase-3 and decreased level of Bcl-X(L)/Bax. Apohalysase, which lacks metalloprotease activity, is also able to induce the apoptosis. Cleaves insulin B chain at '34-His-|-Leu-35', '37-Glu-|-Ala-38', '38-Ala-|-Leu-39', '39-Leu-|-Tyr-40', '40-Tyr-|-Leu-41', '47-Gly-|-Phe-48' and '48-Phe-|-Phe-49' bonds. This chain is Zinc metalloproteinase-disintegrin-like halysase, found in Gloydius halys (Chinese water mocassin).